The following is a 362-amino-acid chain: Somatostatin receptor type 5 (362 aa).

The span at 1-10 (MEPLSLTSTP) shows a compositional bias: polar residues. The interval 1-24 (MEPLSLTSTPSWNASAASSSSHNW) is disordered. At 1–35 (MEPLSLTSTPSWNASAASSSSHNWSLVDPVSPMGA) the chain is on the extracellular side. Low complexity predominate over residues 11–24 (SWNASAASSSSHNW). Residues asparagine 13 and asparagine 23 are each glycosylated (N-linked (GlcNAc...) asparagine). The chain crosses the membrane as a helical span at residues 36–63 (RAVLVPVLYLLVCTVGLGGNTLVIYVVL). At 64–73 (RYAKMKTVTN) the chain is on the cytoplasmic side. The helical transmembrane segment at 74–99 (VYILNLAVADVLFMLGLPFLATQNAV) threads the bilayer. At 100 to 110 (SYWPFGSFLCR) the chain is on the extracellular side. Cysteine 109 and cysteine 184 are joined by a disulfide. Residues 111 to 132 (LVMTLDGINQFTSIFCLMVMSV) traverse the membrane as a helical segment. Residues 133–154 (DRYLAVVHPLRSARWRRPRVAK) are Cytoplasmic-facing. Residues 155–175 (LASAAVWVFSLLMSLPLLVFA) traverse the membrane as a helical segment. The Extracellular portion of the chain corresponds to 176 to 195 (DVQEGWGTCNLSWPEPVGLW). Asparagine 185 carries an N-linked (GlcNAc...) asparagine glycan. The helical transmembrane segment at 196 to 220 (GAAFITYTSVLGFFGPLLVICLCYL) threads the bilayer. The Cytoplasmic portion of the chain corresponds to 221 to 246 (LIVVKVKAAGMRVGSSRRRRSERKVT). The chain crosses the membrane as a helical span at residues 247-272 (RMVVVVVLVFVGCWLPFFIVNIVNLA). Over 273–282 (FTLPEEPTSA) the chain is Extracellular. Residues 283–307 (GLYFFVVVLSYANSCANPLLYGFLS) traverse the membrane as a helical segment. The Cytoplasmic segment spans residues 308-362 (DNFRQSFRKALCLRRGYGVEDADAIEPRPDKSGRPQTTLPTRSCEANGLMQTSRL). A lipid anchor (S-palmitoyl cysteine; by ZDHHC5) is attached at cysteine 319. A disordered region spans residues 330–362 (DAIEPRPDKSGRPQTTLPTRSCEANGLMQTSRL).

The protein belongs to the G-protein coupled receptor 1 family. As to quaternary structure, heterodimer with SSTR2. Heterodimerization with SSTR2 increases cell growth inhibition activity of SSTR2. In terms of processing, palmitoylated at Cys-319 by ZDHHC5, but not ZDHHC8. Palmitoylation creates an additional intracellular loop which is thought to be important for efficient coupling to G-proteins and may target the protein to lipid rafts. In terms of tissue distribution, expressed in adult brain but not in liver, heart, spleen, or kidney.

Its subcellular location is the cell membrane. Receptor for somatostatin-28. The activity of this receptor is mediated by G proteins which inhibit adenylyl cyclase. Increases cell growth inhibition activity of SSTR2 following heterodimerization. In Mus musculus (Mouse), this protein is Somatostatin receptor type 5 (Sstr5).